Here is a 285-residue protein sequence, read N- to C-terminus: 2,4-didehydro-3-deoxy-L-rhamnonate hydrolase (285 aa).

A pyruvate-binding site is contributed by Leu73. Residues Glu119, Glu121, and Asp150 each contribute to the Mg(2+) site. Positions 168 and 238 each coordinate pyruvate.

Belongs to the FAH family. As to quaternary structure, homodimer. Mg(2+) serves as cofactor.

The enzyme catalyses 2,4-didehydro-3-deoxy-L-rhamnonate + H2O = (S)-lactate + pyruvate + H(+). Its pathway is carbohydrate degradation; L-rhamnose degradation. Functionally, hydrolase that catalyzes the hydrolysis of 2,4-didehydro-3-deoxy-L-rhamnonate to pyruvate and L-lactate. Can also hydrolyze L-2,4-diketo-3-deoxylyxonate and L-2,4-diketo-3-deoxymannonate. In vitro can also use acylpyruvates such as acetylpyruvate and trimethylacetopyruvate. Catalyzes the fifth (last) step in an alternative pathway for rhamnose utilization that does not involve phosphorylated intermediates. The chain is 2,4-didehydro-3-deoxy-L-rhamnonate hydrolase from Sphingomonas sp. (strain SKA58).